A 403-amino-acid chain; its full sequence is MKRDYYEILGVARSADKDEIKKAYRKLALKYHPDKNPDNKEAEEKFKEVNEAYEVLSNDDKRRRYDQFGHAGVGSSAASGSGPGGAGYGDINDIFSAFNDMFSGGGGRARTGGSPFSGFEDVFSGGFSGSGSGRRRSAGIQGTDLKIRLKLTLEEIAKGVEKTIKIKKLVTCRECNGTGSKSGKTEICPTCHGSGEVRQATKTMFGQFMNISVCPTCGGEGRVVKDRCPSCYGEGIKQGEATVKITVPAGVQDGNYLTLQGQGNAGPRGGAPGDLIVVIEEKPHELFKRNGDDIIYDLSVGFPDLVMGTKIEVPTLDGHVKLTIPAGTQPNTMLRIGGKGIGHLRGGGSGDLYVRVNVFVPKEVSGKDRDLLKELKKSTVICPNHGDENHEKSIFEKAKDIFS.

Residues 4–69 form the J domain; it reads DYYEILGVAR…DKRRRYDQFG (66 aa). A CR-type zinc finger spans residues 159 to 240; sequence GVEKTIKIKK…CYGEGIKQGE (82 aa). Residues Cys-172, Cys-175, Cys-188, Cys-191, Cys-214, Cys-217, Cys-228, and Cys-231 each coordinate Zn(2+). CXXCXGXG motif repeat units lie at residues 172–179, 188–195, 214–221, and 228–235; these read CRECNGTG, CPTCHGSG, CPTCGGEG, and CPSCYGEG.

It belongs to the DnaJ family. Homodimer. Requires Zn(2+) as cofactor.

The protein resides in the cytoplasm. In terms of biological role, participates actively in the response to hyperosmotic and heat shock by preventing the aggregation of stress-denatured proteins and by disaggregating proteins, also in an autonomous, DnaK-independent fashion. Unfolded proteins bind initially to DnaJ; upon interaction with the DnaJ-bound protein, DnaK hydrolyzes its bound ATP, resulting in the formation of a stable complex. GrpE releases ADP from DnaK; ATP binding to DnaK triggers the release of the substrate protein, thus completing the reaction cycle. Several rounds of ATP-dependent interactions between DnaJ, DnaK and GrpE are required for fully efficient folding. Also involved, together with DnaK and GrpE, in the DNA replication of plasmids through activation of initiation proteins. The polypeptide is Chaperone protein DnaJ (Chlorobaculum tepidum (strain ATCC 49652 / DSM 12025 / NBRC 103806 / TLS) (Chlorobium tepidum)).